Reading from the N-terminus, the 1208-residue chain is Spindle pole body protein pcp1 (1208 aa).

The segment covering 1–17 (MSERDFNTQSPKFKDEN) has biased composition (basic and acidic residues). Residues 1–91 (MSERDFNTQS…DKYNGSLGDK (91 aa)) form a disordered region. The segment covering 48–64 (NDKSSFQTPLRNGSYQP) has biased composition (polar residues). Coiled-coil stretches lie at residues 151 to 375 (LREQ…KENQ), 387 to 803 (TDSM…ANIE), 874 to 1091 (GTET…QSTQ), and 1177 to 1204 (ERMK…AKAK). Ser906 carries the phosphoserine modification.

In terms of assembly, interacts with ccq1.

The protein localises to the nucleus. The protein resides in the cytoplasm. It localises to the cytoskeleton. Its subcellular location is the microtubule organizing center. It is found in the spindle pole body. Spindle pole body component that binds calmodulin. Overexpression of pcp1 causes the formation of supernumerary SPB-like structures and disrupts both mitotic spindle assembly and chromosome segregation. The chain is Spindle pole body protein pcp1 (pcp1) from Schizosaccharomyces pombe (strain 972 / ATCC 24843) (Fission yeast).